A 149-amino-acid polypeptide reads, in one-letter code: ATP synthase epsilon chain (149 aa).

2 stretches are compositionally biased toward basic and acidic residues: residues 99–116 (DVER…RLEE) and 123–134 (RETHEAARDRAR). Residues 99–149 (DVERAESAEERAKRRLEEGVQEEERETHEAARDRARNRLRVAMGKVGTRQS) form a disordered region.

Belongs to the ATPase epsilon chain family. In terms of assembly, F-type ATPases have 2 components, CF(1) - the catalytic core - and CF(0) - the membrane proton channel. CF(1) has five subunits: alpha(3), beta(3), gamma(1), delta(1), epsilon(1). CF(0) has three main subunits: a, b and c.

The protein localises to the cell inner membrane. Produces ATP from ADP in the presence of a proton gradient across the membrane. The polypeptide is ATP synthase epsilon chain (Salinibacter ruber (strain DSM 13855 / M31)).